We begin with the raw amino-acid sequence, 699 residues long: Elongation factor G 1 (699 aa).

The tr-type G domain maps to 8 to 290 (EHYRNIGICA…AVIEFLPSPS (283 aa)). Residues 17–24 (AHVDAGKT), 88–92 (DTPGH), and 142–145 (NKMD) contribute to the GTP site.

Belongs to the TRAFAC class translation factor GTPase superfamily. Classic translation factor GTPase family. EF-G/EF-2 subfamily.

The protein localises to the cytoplasm. Functionally, catalyzes the GTP-dependent ribosomal translocation step during translation elongation. During this step, the ribosome changes from the pre-translocational (PRE) to the post-translocational (POST) state as the newly formed A-site-bound peptidyl-tRNA and P-site-bound deacylated tRNA move to the P and E sites, respectively. Catalyzes the coordinated movement of the two tRNA molecules, the mRNA and conformational changes in the ribosome. This Vibrio parahaemolyticus serotype O3:K6 (strain RIMD 2210633) protein is Elongation factor G 1.